Consider the following 540-residue polypeptide: [Co(II) methylated amine-specific corrinoid protein] reductase (540 aa).

4Fe-4S ferredoxin-type domains lie at 471-500 and 504-535; these read IILEVPVEKCVYCKKCVKECPEAALEIVER and RIAKYDSQKCLGTSCRRCVGVCPEDAIDITKL. 8 residues coordinate [4Fe-4S] cluster: cysteine 480, cysteine 483, cysteine 486, cysteine 490, cysteine 513, cysteine 518, cysteine 521, and cysteine 525.

Monomer. [4Fe-4S] cluster serves as cofactor.

It carries out the reaction 2 Co(II)-[methylamine-specific corrinoid protein] + AH2 + ATP + H2O = 2 Co(I)-[methylamine-specific corrinoid protein] + A + ADP + phosphate + 3 H(+). It catalyses the reaction 2 Co(II)-[dimethylamine-specific corrinoid protein] + AH2 + ATP + H2O = 2 Co(I)-[dimethylamine-specific corrinoid protein] + A + ADP + phosphate + 3 H(+). The enzyme catalyses 2 Co(II)-[trimethylamine-specific corrinoid protein] + AH2 + ATP + H2O = 2 Co(I)-[trimethylamine-specific corrinoid protein] + A + ADP + phosphate + 3 H(+). The protein operates within one-carbon metabolism; methanogenesis from methylamine. It participates in one-carbon metabolism; methanogenesis from dimethylamine. Its pathway is one-carbon metabolism; methanogenesis from trimethylamine. In terms of biological role, reductase required for the activation of corrinoid-dependent methylamine methyltransferase reactions during methanogenesis. Mediates the ATP-dependent reduction of corrinoid proteins from the inactive cobalt(II) state to the active cobalt(I) state. Acts on the corrinoid proteins involved in methanogenesis from monomethylamine (MMA), dimethylamine (DMA) and trimethylamine (TMA), namely MtmC, MtbC and MttC, respectively. In Methanosarcina barkeri, this protein is [Co(II) methylated amine-specific corrinoid protein] reductase.